The primary structure comprises 1097 residues: uncharacterized protein (1097 aa).

Residues 31-1087 (LLNVARQEEE…TALNKLRTRH (1057 aa)) adopt a coiled-coil conformation.

It belongs to the TRAFAC class myosin-kinesin ATPase superfamily. Myosin family. In terms of tissue distribution, specifically expressed in muscles of the head including temporalis and tensor veli palatini.

Functionally, has most probably lost the function in masticatory muscles contraction suspected for its homologs in dog (AC F1PT61) and apes. This is an uncharacterized protein from Homo sapiens (Human).